The chain runs to 142 residues: Hemoglobin subunit pi (142 aa).

Positions 2–142 constitute a Globin domain; sequence TLTQAEKAAV…VSSVLTEKYR (141 aa). 2 residues coordinate heme b: histidine 59 and histidine 88.

It belongs to the globin family.

Its function is as follows. The pi' chain is the counterpart of the alpha chain in the major early embryonic hemoglobin P. This is Hemoglobin subunit pi from Cairina moschata (Muscovy duck).